Reading from the N-terminus, the 1311-residue chain is Cyclin-G-associated kinase (1311 aa).

Residue Ser2 is modified to N-acetylserine. Phosphoserine is present on residues Ser2 and Ser16. Positions 40 to 314 (LRVRRVLAEG…SIAEVVHQLQ (275 aa)) constitute a Protein kinase domain. Catalysis depends on Asp173, which acts as the Proton acceptor. A Phosphatase tensin-type domain is found at 399-566 (SVANYAKGDL…EYMCDMVAEE (168 aa)). Residue Ser456 is modified to Phosphoserine. Residues 572–710 (SKPILVRAVV…FQVNLEVEVE (139 aa)) enclose the C2 tensin-type domain. 2 disordered regions span residues 709 to 729 (VEPR…SMRG) and 749 to 788 (FGKP…SADA). A Phosphoserine modification is found at Ser770. A compositionally biased stretch (low complexity) spans 770 to 788 (SPEAEPTDSDSPPSSSADA). Thr776 is modified (phosphothreonine). Residue Ser783 is modified to Phosphoserine. Residue Thr794 is modified to Phosphothreonine. 3 disordered regions span residues 801-860 (KEAE…VQQD), 913-1035 (CLLG…DLLG), and 1047-1150 (AVAP…PNYA). 5 positions are modified to phosphoserine: Ser811, Ser826, Ser829, Ser834, and Ser939. Low complexity-rich tracts occupy residues 925-939 (PPED…LLAS) and 950-966 (PRGG…PLLP). Composition is skewed to polar residues over residues 967–976 (SSGNNSQPCS) and 1070–1080 (SQASWTKSQNP). Ser1096 carries the phosphoserine modification. The segment covering 1109–1124 (TATTPKGSSSWQTSRP) has biased composition (polar residues). Arg1123 is modified (omega-N-methylarginine). 2 positions are modified to phosphoserine: Ser1176 and Ser1185. The J domain maps to 1247-1311 (SRWTPVGMAD…FENQGSRPLF (65 aa)).

It belongs to the protein kinase superfamily. Ser/Thr protein kinase family. In terms of tissue distribution, ubiquitous. Highest in testis.

The protein resides in the cytoplasm. Its subcellular location is the perinuclear region. It localises to the golgi apparatus. The protein localises to the trans-Golgi network. It is found in the cell junction. The protein resides in the focal adhesion. Its subcellular location is the cytoplasmic vesicle. It localises to the clathrin-coated vesicle. The catalysed reaction is L-seryl-[protein] + ATP = O-phospho-L-seryl-[protein] + ADP + H(+). The enzyme catalyses L-threonyl-[protein] + ATP = O-phospho-L-threonyl-[protein] + ADP + H(+). Associates with cyclin G and CDK5. Seems to act as an auxilin homolog that is involved in the uncoating of clathrin-coated vesicles by Hsc70 in non-neuronal cells. Expression oscillates slightly during the cell cycle, peaking at G1. May play a role in clathrin-mediated endocytosis and intracellular trafficking, and in the dynamics of clathrin assembly/disassembly. The sequence is that of Cyclin-G-associated kinase from Homo sapiens (Human).